A 245-amino-acid chain; its full sequence is Adapter protein MecA (245 aa).

This sequence belongs to the MecA family. As to quaternary structure, homodimer.

Its function is as follows. Enables the recognition and targeting of unfolded and aggregated proteins to the ClpC protease or to other proteins involved in proteolysis. This chain is Adapter protein MecA, found in Streptococcus pneumoniae (strain ATCC BAA-255 / R6).